The sequence spans 160 residues: Transcription elongation factor GreA (160 aa).

Residues 1–72 are a coiled coil; the sequence is MAEKTYPMTL…QISSLETKIR (72 aa).

It belongs to the GreA/GreB family.

Necessary for efficient RNA polymerase transcription elongation past template-encoded arresting sites. The arresting sites in DNA have the property of trapping a certain fraction of elongating RNA polymerases that pass through, resulting in locked ternary complexes. Cleavage of the nascent transcript by cleavage factors such as GreA or GreB allows the resumption of elongation from the new 3'terminus. GreA releases sequences of 2 to 3 nucleotides. This Streptococcus gordonii (strain Challis / ATCC 35105 / BCRC 15272 / CH1 / DL1 / V288) protein is Transcription elongation factor GreA.